Reading from the N-terminus, the 362-residue chain is MSGAGEAAIRARFRLDWPGFALDVDLDLPGQGVTALFGHSGSGKTTLLRCIAGLERAAEGELRVRGEVWQDATRFVPTHRRPLGYVFQEASLFPHLSARGNLEYGMKRSREPLARAALDDVVGLLGIGRLLDRRPEQLSGGERQRVAIARALAVKPRLLLMDEPLAALDFARKQEVLPYLERLHDELDIPVLYVSHAPDEVARLADHLVVMQDGRAHASGPLGDTLARLDLPIRLGEDVGVVLDAVVAARDPAWHLVEMAFAGGRLWARDNGQPLGHRGRVRILARDVSLSRAPVSGTSILNTLPAVVVDSVDDGHPALVLVKLRVGDSPLLARLTRRSAHALELAPGRQVYAQIKAVALVG.

Residues 4-238 (AGEAAIRARF…LDLPIRLGED (235 aa)) enclose the ABC transporter domain. Position 38 to 45 (38 to 45 (GHSGSGKT)) interacts with ATP. Residues 297 to 362 (GTSILNTLPA…AQIKAVALVG (66 aa)) enclose the Mop domain.

It belongs to the ABC transporter superfamily. Molybdate importer (TC 3.A.1.8) family. The complex is composed of two ATP-binding proteins (ModC), two transmembrane proteins (ModB) and a solute-binding protein (ModA).

It is found in the cell inner membrane. The catalysed reaction is molybdate(out) + ATP + H2O = molybdate(in) + ADP + phosphate + H(+). Part of the ABC transporter complex ModABC involved in molybdenum import. Responsible for energy coupling to the transport system. This chain is Molybdenum import ATP-binding protein ModC, found in Thiobacillus denitrificans (strain ATCC 25259 / T1).